The chain runs to 157 residues: Large ribosomal subunit protein uL10 (157 aa).

This sequence belongs to the universal ribosomal protein uL10 family. In terms of assembly, part of the ribosomal stalk of the 50S ribosomal subunit. The N-terminus interacts with L11 and the large rRNA to form the base of the stalk. The C-terminus forms an elongated spine to which L12 dimers bind in a sequential fashion forming a multimeric L10(L12)X complex.

Forms part of the ribosomal stalk, playing a central role in the interaction of the ribosome with GTP-bound translation factors. The protein is Large ribosomal subunit protein uL10 of Campylobacter hominis (strain ATCC BAA-381 / DSM 21671 / CCUG 45161 / LMG 19568 / NCTC 13146 / CH001A).